The chain runs to 428 residues: Glutamate-1-semialdehyde 2,1-aminomutase (428 aa).

Lys-265 is subject to N6-(pyridoxal phosphate)lysine.

It belongs to the class-III pyridoxal-phosphate-dependent aminotransferase family. HemL subfamily. In terms of assembly, homodimer. The cofactor is pyridoxal 5'-phosphate.

Its subcellular location is the cytoplasm. The enzyme catalyses (S)-4-amino-5-oxopentanoate = 5-aminolevulinate. Its pathway is porphyrin-containing compound metabolism; protoporphyrin-IX biosynthesis; 5-aminolevulinate from L-glutamyl-tRNA(Glu): step 2/2. The chain is Glutamate-1-semialdehyde 2,1-aminomutase from Proteus mirabilis (strain HI4320).